The primary structure comprises 328 residues: Fructose-1,6-bisphosphatase class 1 (328 aa).

Mg(2+) contacts are provided by E89, D110, L112, and D113. Residues N206, Y234, 252–254 (YLY), and K264 each bind substrate. E270 contacts Mg(2+).

It belongs to the FBPase class 1 family. Homotetramer. Requires Mg(2+) as cofactor.

It is found in the cytoplasm. It catalyses the reaction beta-D-fructose 1,6-bisphosphate + H2O = beta-D-fructose 6-phosphate + phosphate. Its pathway is carbohydrate biosynthesis; gluconeogenesis. The polypeptide is Fructose-1,6-bisphosphatase class 1 (Wigglesworthia glossinidia brevipalpis).